The following is a 224-amino-acid chain: Small ribosomal subunit protein uS3 (224 aa).

The KH type-2 domain occupies 38–106 (LREFVKEKLG…EVYLNVVEVR (69 aa)).

It belongs to the universal ribosomal protein uS3 family. Part of the 30S ribosomal subunit. Forms a tight complex with proteins S10 and S14.

In terms of biological role, binds the lower part of the 30S subunit head. Binds mRNA in the 70S ribosome, positioning it for translation. The polypeptide is Small ribosomal subunit protein uS3 (Anaeromyxobacter dehalogenans (strain 2CP-1 / ATCC BAA-258)).